The sequence spans 377 residues: Nitric oxide reductase FlRd-NAD(+) reductase (377 aa).

This sequence belongs to the FAD-dependent oxidoreductase family. The cofactor is FAD.

Its subcellular location is the cytoplasm. It catalyses the reaction 2 reduced [nitric oxide reductase rubredoxin domain] + NAD(+) + H(+) = 2 oxidized [nitric oxide reductase rubredoxin domain] + NADH. It functions in the pathway nitrogen metabolism; nitric oxide reduction. In terms of biological role, one of at least two accessory proteins for anaerobic nitric oxide (NO) reductase. Reduces the rubredoxin moiety of NO reductase. The polypeptide is Nitric oxide reductase FlRd-NAD(+) reductase (Escherichia coli (strain K12 / MC4100 / BW2952)).